The sequence spans 197 residues: Dephospho-CoA kinase (197 aa).

One can recognise a DPCK domain in the interval 3-197; it reads ILGLTGSIAM…TGCLVGQGSR (195 aa). Position 11 to 16 (11 to 16) interacts with ATP; it reads AMGKST.

The protein belongs to the CoaE family.

The protein resides in the cytoplasm. It carries out the reaction 3'-dephospho-CoA + ATP = ADP + CoA + H(+). It participates in cofactor biosynthesis; coenzyme A biosynthesis; CoA from (R)-pantothenate: step 5/5. In terms of biological role, catalyzes the phosphorylation of the 3'-hydroxyl group of dephosphocoenzyme A to form coenzyme A. The chain is Dephospho-CoA kinase from Zymomonas mobilis subsp. mobilis (strain ATCC 31821 / ZM4 / CP4).